Reading from the N-terminus, the 469-residue chain is Aspartyl/glutamyl-tRNA(Asn/Gln) amidotransferase subunit B (469 aa).

The protein belongs to the GatB/GatE family. GatB subfamily. As to quaternary structure, heterotrimer of A, B and C subunits.

The enzyme catalyses L-glutamyl-tRNA(Gln) + L-glutamine + ATP + H2O = L-glutaminyl-tRNA(Gln) + L-glutamate + ADP + phosphate + H(+). It carries out the reaction L-aspartyl-tRNA(Asn) + L-glutamine + ATP + H2O = L-asparaginyl-tRNA(Asn) + L-glutamate + ADP + phosphate + 2 H(+). In terms of biological role, allows the formation of correctly charged Asn-tRNA(Asn) or Gln-tRNA(Gln) through the transamidation of misacylated Asp-tRNA(Asn) or Glu-tRNA(Gln) in organisms which lack either or both of asparaginyl-tRNA or glutaminyl-tRNA synthetases. The reaction takes place in the presence of glutamine and ATP through an activated phospho-Asp-tRNA(Asn) or phospho-Glu-tRNA(Gln). The chain is Aspartyl/glutamyl-tRNA(Asn/Gln) amidotransferase subunit B from Methanococcus maripaludis (strain DSM 14266 / JCM 13030 / NBRC 101832 / S2 / LL).